Reading from the N-terminus, the 247-residue chain is ATP synthase subunit a, chloroplastic (247 aa).

5 helical membrane-spanning segments follow: residues 38 to 58, 95 to 115, 134 to 154, 199 to 219, and 220 to 240; these read QVLI…TLAV, VPFI…GALL, INTT…AGIS, LVVV…VMFL, and GLFT…AYIG.

It belongs to the ATPase A chain family. As to quaternary structure, F-type ATPases have 2 components, CF(1) - the catalytic core - and CF(0) - the membrane proton channel. CF(1) has five subunits: alpha(3), beta(3), gamma(1), delta(1), epsilon(1). CF(0) has four main subunits: a, b, b' and c.

Its subcellular location is the plastid. It localises to the chloroplast thylakoid membrane. Functionally, key component of the proton channel; it plays a direct role in the translocation of protons across the membrane. The protein is ATP synthase subunit a, chloroplastic of Daucus carota (Wild carrot).